Consider the following 259-residue polypeptide: MILLIDVGNTNIVLGIHDNEKYIASWRISTDSKKTSDEYSIQVMQLFNQAKLNPEEVEGIIISSVVPNIMHSLENMVRKCFCKEPIVVGPGIKTGINIKYDNPKEVGADRIVNAVAAFEKHKKPMIIIDFGTATTFCAITEKGDYLGGNICPGIQISADALFERAAKLPRIELEKPKSVICKNTVTSMQAGIIYGYIGKVEYIVKRMKKEMMDLGEKEPFVLATGGLAKLVYSETDVIDEVDRKLTLEGLKILYEKNKE.

6–13 (DVGNTNIV) contacts ATP. Residues Tyr-100 and 107 to 110 (GADR) each bind substrate. The active-site Proton acceptor is Asp-109. Residue Asp-129 coordinates K(+). Thr-132 contributes to the ATP binding site. Thr-184 lines the substrate pocket.

It belongs to the type III pantothenate kinase family. As to quaternary structure, homodimer. Requires NH4(+) as cofactor. K(+) is required as a cofactor.

The protein resides in the cytoplasm. The catalysed reaction is (R)-pantothenate + ATP = (R)-4'-phosphopantothenate + ADP + H(+). The protein operates within cofactor biosynthesis; coenzyme A biosynthesis; CoA from (R)-pantothenate: step 1/5. Catalyzes the phosphorylation of pantothenate (Pan), the first step in CoA biosynthesis. The sequence is that of Type III pantothenate kinase from Clostridium perfringens (strain ATCC 13124 / DSM 756 / JCM 1290 / NCIMB 6125 / NCTC 8237 / Type A).